A 733-amino-acid chain; its full sequence is 1,4-alpha-glucan branching enzyme GlgB (733 aa).

Aspartate 413 (nucleophile) is an active-site residue. Residue glutamate 466 is the Proton donor of the active site.

The protein belongs to the glycosyl hydrolase 13 family. GlgB subfamily. In terms of assembly, monomer.

It catalyses the reaction Transfers a segment of a (1-&gt;4)-alpha-D-glucan chain to a primary hydroxy group in a similar glucan chain.. It participates in glycan biosynthesis; glycogen biosynthesis. Functionally, catalyzes the formation of the alpha-1,6-glucosidic linkages in glycogen by scission of a 1,4-alpha-linked oligosaccharide from growing alpha-1,4-glucan chains and the subsequent attachment of the oligosaccharide to the alpha-1,6 position. This is 1,4-alpha-glucan branching enzyme GlgB from Leifsonia xyli subsp. xyli (strain CTCB07).